The chain runs to 237 residues: 2-C-methyl-D-erythritol 4-phosphate cytidylyltransferase (237 aa).

This sequence belongs to the IspD/TarI cytidylyltransferase family. IspD subfamily.

The catalysed reaction is 2-C-methyl-D-erythritol 4-phosphate + CTP + H(+) = 4-CDP-2-C-methyl-D-erythritol + diphosphate. It functions in the pathway isoprenoid biosynthesis; isopentenyl diphosphate biosynthesis via DXP pathway; isopentenyl diphosphate from 1-deoxy-D-xylulose 5-phosphate: step 2/6. Functionally, catalyzes the formation of 4-diphosphocytidyl-2-C-methyl-D-erythritol from CTP and 2-C-methyl-D-erythritol 4-phosphate (MEP). The sequence is that of 2-C-methyl-D-erythritol 4-phosphate cytidylyltransferase from Acaryochloris marina (strain MBIC 11017).